The sequence spans 160 residues: Ribosome maturation factor RimP (160 aa).

Belongs to the RimP family.

The protein resides in the cytoplasm. Its function is as follows. Required for maturation of 30S ribosomal subunits. The chain is Ribosome maturation factor RimP from Cronobacter sakazakii (strain ATCC BAA-894) (Enterobacter sakazakii).